The primary structure comprises 335 residues: Pyridoxal 5'-phosphate synthase subunit PdxS (335 aa).

Asp-30 serves as a coordination point for D-ribose 5-phosphate. Catalysis depends on Lys-87, which acts as the Schiff-base intermediate with D-ribose 5-phosphate. Position 159 (Gly-159) interacts with D-ribose 5-phosphate. Arg-171 contacts D-glyceraldehyde 3-phosphate. D-ribose 5-phosphate contacts are provided by residues Gly-257 and 278–279 (GS).

It belongs to the PdxS/SNZ family. In the presence of PdxT, forms a dodecamer of heterodimers.

The catalysed reaction is aldehydo-D-ribose 5-phosphate + D-glyceraldehyde 3-phosphate + L-glutamine = pyridoxal 5'-phosphate + L-glutamate + phosphate + 3 H2O + H(+). Its pathway is cofactor biosynthesis; pyridoxal 5'-phosphate biosynthesis. Its function is as follows. Catalyzes the formation of pyridoxal 5'-phosphate from ribose 5-phosphate (RBP), glyceraldehyde 3-phosphate (G3P) and ammonia. The ammonia is provided by the PdxT subunit. Can also use ribulose 5-phosphate and dihydroxyacetone phosphate as substrates, resulting from enzyme-catalyzed isomerization of RBP and G3P, respectively. The polypeptide is Pyridoxal 5'-phosphate synthase subunit PdxS (Pyrococcus furiosus (strain ATCC 43587 / DSM 3638 / JCM 8422 / Vc1)).